Reading from the N-terminus, the 108-residue chain is Nucleoid-associated protein ACP_0492 (108 aa).

The protein belongs to the YbaB/EbfC family. In terms of assembly, homodimer.

It is found in the cytoplasm. Its subcellular location is the nucleoid. Functionally, binds to DNA and alters its conformation. May be involved in regulation of gene expression, nucleoid organization and DNA protection. In Acidobacterium capsulatum (strain ATCC 51196 / DSM 11244 / BCRC 80197 / JCM 7670 / NBRC 15755 / NCIMB 13165 / 161), this protein is Nucleoid-associated protein ACP_0492.